The following is a 218-amino-acid chain: CTD kinase subunit gamma (218 aa).

Residues 2 to 138 (DPFEGRMTFL…DAMATVEAHE (137 aa)) enclose the CID domain. The tract at residues 137 to 157 (HEQASKSGDTSTSGAISKNDI) is disordered. Polar residues predominate over residues 141–152 (SKSGDTSTSGAI).

This sequence belongs to the CTK3 family. In terms of assembly, CTDK-I consists of three subunits, ctk1/lsk1, ctk2/lsc1 and ctk3 (also called alpha, beta and gamma).

The protein localises to the cytoplasm. Its subcellular location is the nucleus. In terms of biological role, subunit of the CTDK-I complex, which hyperphosphorylates the C-terminal heptapeptide repeat domain (CTD) of the largest RNA polymerase II subunit. As part of the CTDK-I complex, involved in RNA polymerase II transcriptional elongation and pre-mRNA 3'-end processing. Together with ctk2, required for ctk1/lsk1 CTD kinase activation. The protein is CTD kinase subunit gamma of Schizosaccharomyces pombe (strain 972 / ATCC 24843) (Fission yeast).